Consider the following 262-residue polypeptide: Methanethiol S-methyltransferase (262 aa).

5 helical membrane passes run 22 to 42 (LYSLLSYLFFLMTLLYLIGFV), 55 to 75 (PGASWPLALLVDVLLITLFAV), 100 to 120 (ATYVLASSVVLVVMFWLWQPI), 134 to 154 (AVLTTLFWLGWGLILVATFLI), and 195 to 215 (GFLMAFWATPEMTVGHLVFAL).

It belongs to the nurim family.

The protein localises to the membrane. It catalyses the reaction methanethiol + S-adenosyl-L-methionine = dimethyl sulfide + S-adenosyl-L-homocysteine + H(+). In terms of biological role, catalyzes the methylation of methanethiol (MeSH) to yield dimethylsulphide (DMS). This is Methanethiol S-methyltransferase from Pseudomonas deceptionensis.